We begin with the raw amino-acid sequence, 373 residues long: MKKKEIKQLKNEIKIALLNSDVETLSHIGKEGHGFLMKSLRKSVWVSLCGLSCRHRMECLSRSTSQSSYADQNQVHLDSERSFFQYKLNPFLLRKHRSQLTKLLSVVFKHYPELCYYQGLHDIAQILLLTLPFSHALPLMEHLVFYRLRDFMLPTLDGTVKQLQLILAVIKARDPTLYEYLIKADIQCYFALSWLITWFAHDVSDISVVCRLFDFFISSHPLTVVYTCAQVVLDNRTSIIELLWDNSGADLLHSYLCKLPASINVNQLIKNTCATISAVPFSSLPLDRYQISPYSCLRNTGDPWEYMSRSNGLLLFRLQLAELQEEKHKPGTKVPAVFLQENIFNGCNMLAAITVIGIGIVASQLIPKSTSNS.

Residues 35 to 220 (FLMKSLRKSV…RLFDFFISSH (186 aa)) form the Rab-GAP TBC domain. A helical transmembrane segment spans residues 343-363 (IFNGCNMLAAITVIGIGIVAS).

The protein localises to the endoplasmic reticulum membrane. In terms of biological role, has a role in vesicular trafficking and septation during cytokinesis. This is GTPase-activating protein gyp10 (gyp10) from Schizosaccharomyces pombe (strain 972 / ATCC 24843) (Fission yeast).